The primary structure comprises 265 residues: Octanoyltransferase (265 aa).

Residues aspartate 35–glutamate 254 form the BPL/LPL catalytic domain. Substrate contacts are provided by residues arginine 73–histidine 80, alanine 184–glycine 186, and glycine 197–alanine 199. Residue cysteine 215 is the Acyl-thioester intermediate of the active site.

This sequence belongs to the LipB family.

The protein resides in the cytoplasm. It carries out the reaction octanoyl-[ACP] + L-lysyl-[protein] = N(6)-octanoyl-L-lysyl-[protein] + holo-[ACP] + H(+). The protein operates within protein modification; protein lipoylation via endogenous pathway; protein N(6)-(lipoyl)lysine from octanoyl-[acyl-carrier-protein]: step 1/2. In terms of biological role, catalyzes the transfer of endogenously produced octanoic acid from octanoyl-acyl-carrier-protein onto the lipoyl domains of lipoate-dependent enzymes. Lipoyl-ACP can also act as a substrate although octanoyl-ACP is likely to be the physiological substrate. This Streptomyces coelicolor (strain ATCC BAA-471 / A3(2) / M145) protein is Octanoyltransferase.